The sequence spans 380 residues: Probable transposase for insertion sequence element IS701 (380 aa).

Functionally, involved in the transposition of the insertion sequence. This chain is Probable transposase for insertion sequence element IS701, found in Microchaete diplosiphon (Fremyella diplosiphon).